Consider the following 122-residue polypeptide: Large ribosomal subunit protein uL14 (122 aa).

This sequence belongs to the universal ribosomal protein uL14 family. In terms of assembly, part of the 50S ribosomal subunit. Forms a cluster with proteins L3 and L19. In the 70S ribosome, L14 and L19 interact and together make contacts with the 16S rRNA in bridges B5 and B8.

Functionally, binds to 23S rRNA. Forms part of two intersubunit bridges in the 70S ribosome. In Rickettsia felis (strain ATCC VR-1525 / URRWXCal2) (Rickettsia azadi), this protein is Large ribosomal subunit protein uL14.